A 265-amino-acid polypeptide reads, in one-letter code: Undecaprenyl-diphosphatase (265 aa).

The next 7 membrane-spanning stretches (helical) occupy residues 41 to 61, 75 to 95, 104 to 124, 137 to 157, 180 to 200, 215 to 235, and 244 to 264; these read IAYT…LIYF, LKFL…LYVI, YNPS…GIYI, LSTK…LPGV, YSYL…LLFT, GIAL…GFLL, and YLID…GLII.

It belongs to the UppP family.

It is found in the cell membrane. The enzyme catalyses di-trans,octa-cis-undecaprenyl diphosphate + H2O = di-trans,octa-cis-undecaprenyl phosphate + phosphate + H(+). In terms of biological role, catalyzes the dephosphorylation of undecaprenyl diphosphate (UPP). This is Undecaprenyl-diphosphatase from Saccharolobus islandicus (strain Y.N.15.51 / Yellowstone #2) (Sulfolobus islandicus).